Reading from the N-terminus, the 818-residue chain is Sorting nexin-29 (818 aa).

The 145-residue stretch at 36–180 (SDSDSRVTCL…ILFAINIDNK (145 aa)) folds into the RUN domain. The disordered stretch occupies residues 267–299 (VSFDDDEEEQGTGDTLKKMPGTAESSEENSDRS). 7 positions are modified to phosphoserine: S268, S291, S292, S330, S344, S447, and S452. Disordered regions lie at residues 343–375 (KSID…PDRT) and 441–462 (RYRE…PSAS). Residues 445–462 (ASSPGQGSPLSSLLPSAS) show a composition bias toward low complexity. A coiled-coil region spans residues 467 to 547 (MTVHELRQAI…VLKVQLKKYV (81 aa)). Position 642 is a phosphoserine (S642). T644 bears the Phosphothreonine mark. A phosphoserine mark is found at S645 and S649. Residues 659–782 (ALINVWIPSV…PFFVDITPPG (124 aa)) form the PX domain. The segment at 781–818 (PGEPLNKSSRPKAVSRFPKLSRGHPREVRNVEPQSGDL) is disordered.

Belongs to the sorting nexin family.

This is Sorting nexin-29 (Snx29) from Mus musculus (Mouse).